The sequence spans 359 residues: Phospho-N-acetylmuramoyl-pentapeptide-transferase (359 aa).

The Periplasmic portion of the chain corresponds to 1–25 (MLYQLALLLKDYWFAFNVLKYITFR). The chain crosses the membrane as a helical span at residues 26-48 (SFTAVLIAFFLTLVLSPSFINRL). Residues 49-74 (RKIQRLFGGYVREYTPESHEVKKYTP) lie on the Cytoplasmic side of the membrane. Muraymycin D2 is bound by residues Lys70 and Thr75. Residues 75–92 (TMGGIVILIVVTLSTLLL) form a helical membrane-spanning segment. Topologically, residues 93 to 98 (MRWDIK) are periplasmic. The chain crosses the membrane as a helical span at residues 99–120 (YTWVVLLSFLSFGTIGFWDDYV). The Cytoplasmic segment spans residues 121–130 (KLKNKKGISI). A helical membrane pass occupies residues 131-152 (KTKFLLQVLSASLISVLIYYWA). Residues 153–172 (DIDTILYFPFFKELYVDLGV) lie on the Periplasmic side of the membrane. Residues 173-194 (LYLPFAVFVIVGSANAVNLTDG) traverse the membrane as a helical segment. Asn190, Asp193, and Asp196 together coordinate muraymycin D2. At 195-197 (LDG) the chain is on the cytoplasmic side. Residues 198 to 218 (LAIGPAMTTATALGVVAYAVG) form a helical membrane-spanning segment. At 219–233 (HSKIAQYLNIPYVPY) the chain is on the periplasmic side. Residues 234 to 255 (AGELTVFCFALVGAGLGFLWFN) traverse the membrane as a helical segment. Residues 256-264 (SFPAQMFMG) lie on the Cytoplasmic side of the membrane. Muraymycin D2 contacts are provided by Gly264 and Ser268. A helical transmembrane segment spans residues 265–280 (DVGSLSIGASLATVAL). Residues 281–284 (LTKS) lie on the Periplasmic side of the membrane. The chain crosses the membrane as a helical span at residues 285–310 (EFIFAVAAGVFVFETISVILQIIYFR). Gln305 and Ala321 together coordinate muraymycin D2. The Cytoplasmic segment spans residues 311 to 332 (WTGGKRLFKRAPFHHHLELNGL). A helical transmembrane segment spans residues 333–355 (PEPKIVVRMWIISILLAIIAISM). The Periplasmic portion of the chain corresponds to 356–359 (LKLR).

This sequence belongs to the glycosyltransferase 4 family. MraY subfamily. As to quaternary structure, homodimer. The cofactor is Mg(2+). Requires Mn(2+) as cofactor.

The protein localises to the cell inner membrane. It catalyses the reaction UDP-N-acetyl-alpha-D-muramoyl-L-alanyl-gamma-D-glutamyl-meso-2,6-diaminopimeloyl-D-alanyl-D-alanine + di-trans,octa-cis-undecaprenyl phosphate = di-trans,octa-cis-undecaprenyl diphospho-N-acetyl-alpha-D-muramoyl-L-alanyl-D-glutamyl-meso-2,6-diaminopimeloyl-D-alanyl-D-alanine + UMP. It functions in the pathway cell wall biogenesis; peptidoglycan biosynthesis. With respect to regulation, inhibited by natural nucleoside antibiotics including tunicamycin, capuramycin and muraymycin. Usually the cofactor magnesium is not required for antibiotic binding. Catalyzes the initial step of the lipid cycle reactions in the biosynthesis of the cell wall peptidoglycan: transfers peptidoglycan precursor phospho-MurNAc-pentapeptide from UDP-MurNAc-pentapeptide onto the lipid carrier undecaprenyl phosphate, yielding undecaprenyl-pyrophosphoryl-MurNAc-pentapeptide, known as lipid I. This is Phospho-N-acetylmuramoyl-pentapeptide-transferase from Aquifex aeolicus (strain VF5).